We begin with the raw amino-acid sequence, 410 residues long: Histone-lysine N-methyltransferase SUV39H2 (410 aa).

The Chromo domain maps to 47–105 (YEVEYLCDYKVVKDMEYYLVKWKGWPDSTNTWEPLQNLKCPLLLQQFFNDKHNYLSQVK). The Pre-SET domain maps to 189–247 (FGCSCTDCFFEKCCPAEAGVLLAYNKNQQIKIPPGTPIYECNSRCQCGPDCPNRIVQKG). C191, C193, C196, C201, C202, C229, C233, C235, and C239 together coordinate Zn(2+). Residues 250–373 (YSLCIFRTSN…AGEELTFDYQ (124 aa)) form the SET domain. S-adenosyl-L-methionine-binding positions include 261-263 (CGW), Y304, and 330-331 (NH). C333 provides a ligand contact to Zn(2+). Residues S381, S384, and S388 each carry the phosphoserine modification. The Post-SET domain maps to 394 to 410 (ARTVCKCGAVTCRGYLN). Zn(2+)-binding residues include C398, C400, and C405.

This sequence belongs to the class V-like SAM-binding methyltransferase superfamily. Histone-lysine methyltransferase family. Suvar3-9 subfamily. Interacts with SMAD5. The large PER complex involved in the histone methylation is composed of at least PER2, CBX3, TRIM28, SUV39H1 and/or SUV39H2; CBX3 mediates the formation of the complex. Post-translationally, ubiquitinated by the DCX(DCAF13) E3 ubiquitin ligase complex, leading to its degradation.

Its subcellular location is the nucleus. The protein localises to the chromosome. It is found in the centromere. The catalysed reaction is L-lysyl(9)-[histone H3] + 3 S-adenosyl-L-methionine = N(6),N(6),N(6)-trimethyl-L-lysyl(9)-[histone H3] + 3 S-adenosyl-L-homocysteine + 3 H(+). In terms of biological role, histone methyltransferase that specifically trimethylates 'Lys-9' of histone H3 using monomethylated H3 'Lys-9' as substrate. H3 'Lys-9' trimethylation represents a specific tag for epigenetic transcriptional repression by recruiting HP1 (CBX1, CBX3 and/or CBX5) proteins to methylated histones. Mainly functions in heterochromatin regions, thereby playing a central role in the establishment of constitutive heterochromatin at pericentric and telomere regions. H3 'Lys-9' trimethylation is also required to direct DNA methylation at pericentric repeats. SUV39H1 is targeted to histone H3 via its interaction with RB1 and is involved in many processes, such as cell cycle regulation, transcriptional repression and regulation of telomere length. May participate in regulation of higher-order chromatin organization during spermatogenesis. Recruited by the large PER complex to the E-box elements of the circadian target genes such as PER2 itself or PER1, contributes to the conversion of local chromatin to a heterochromatin-like repressive state through H3 'Lys-9' trimethylation. This is Histone-lysine N-methyltransferase SUV39H2 (SUV39H2) from Bos taurus (Bovine).